The chain runs to 245 residues: DNA polymerase sliding clamp 1 (245 aa).

This sequence belongs to the PCNA family. The subunits circularize to form a toroid; DNA passes through its center. Replication factor C (RFC) is required to load the toroid on the DNA. Forms a dimeric complex with PCNA3 and a trimeric complex with PCNA2 and PCNA3; does not form homotrimers.

Its function is as follows. Sliding clamp subunit that acts as a moving platform for DNA processing. Responsible for tethering the catalytic subunit of DNA polymerase and other proteins to DNA during high-speed replication. The trimeric complex inhibits DNA ligase and both 3'-5' and 5'-3' activity of Hel308 (Hjm) helicase, but stimulates Hjc, the Holliday junction cleavage enzyme. The chain is DNA polymerase sliding clamp 1 from Sulfurisphaera tokodaii (strain DSM 16993 / JCM 10545 / NBRC 100140 / 7) (Sulfolobus tokodaii).